The chain runs to 269 residues: Phosphate import ATP-binding protein PstB 1 (269 aa).

One can recognise an ABC transporter domain in the interval 16–255 (FTTQNLDIYY…DRTGKVFGDP (240 aa)). Residue 48-55 (GPSGCGKS) participates in ATP binding.

It belongs to the ABC transporter superfamily. Phosphate importer (TC 3.A.1.7) family. As to quaternary structure, the complex is composed of two ATP-binding proteins (PstB), two transmembrane proteins (PstC and PstA) and a solute-binding protein (PstS).

Its subcellular location is the cell inner membrane. It carries out the reaction phosphate(out) + ATP + H2O = ADP + 2 phosphate(in) + H(+). Functionally, part of the ABC transporter complex PstSACB involved in phosphate import. Responsible for energy coupling to the transport system. This chain is Phosphate import ATP-binding protein PstB 1, found in Synechocystis sp. (strain ATCC 27184 / PCC 6803 / Kazusa).